Consider the following 105-residue polypeptide: Dicamba O-demethylase, ferredoxin component (105 aa).

A 2Fe-2S ferredoxin-type domain is found at 2–105; sequence PQITVVNQSG…GIKVTIAQED (104 aa). [2Fe-2S] cluster is bound by residues cysteine 40, cysteine 46, cysteine 49, and cysteine 86.

The protein belongs to the adrenodoxin/putidaredoxin family. In terms of assembly, monomer. The dicamba O-demethylase multicomponent enzyme system is composed of an oxygenase component (DdmC) and an electron transfer component formed by a ferredoxin reductase (DdmA1) and a ferredoxin (DdmB). In vitro, dicamba O-demethylase assays in which DdmA2 is substituted for DdmA1 demonstrate that the two enzymes possess nearly identical activities. [2Fe-2S] cluster serves as cofactor.

Component of the dicamba O-demethylase multicomponent enzyme system involved in the degradation of the herbicide dicamba. In vitro, functions as an intermediate electron transfer protein. The chain is Dicamba O-demethylase, ferredoxin component from Stenotrophomonas maltophilia (Pseudomonas maltophilia).